Consider the following 429-residue polypeptide: Actin-like protein 6A (429 aa).

Ser2 carries the N-acetylserine modification. Lys62 participates in a covalent cross-link: Glycyl lysine isopeptide (Lys-Gly) (interchain with G-Cter in SUMO2). 2 positions are modified to phosphoserine: Ser86 and Ser233.

This sequence belongs to the actin family. As to quaternary structure, component of numerous complexes with chromatin remodeling and histone acetyltransferase activity. Component of the NuA4 histone acetyltransferase complex which contains the catalytic subunit KAT5/TIP60 and the subunits EP400, TRRAP/PAF400, BRD8/SMAP, EPC1, DMAP1/DNMAP1, RUVBL1/TIP49, RUVBL2, ING3, actin, ACTL6A/BAF53A, MORF4L1/MRG15, MORF4L2/MRGX, MRGBP, YEATS4/GAS41, VPS72/YL1 and MEAF6. The NuA4 complex interacts with MYC and the adenovirus E1A protein. Component of a NuA4-related complex which contains EP400, TRRAP/PAF400, SRCAP, BRD8/SMAP, EPC1, DMAP1/DNMAP1, RUVBL1/TIP49, RUVBL2, actin, ACTL6A/BAF53A, VPS72 and YEATS4/GAS41. Component of the multiprotein chromatin-remodeling complexes SWI/SNF: SWI/SNF-A (BAF), SWI/SNF-B (PBAF) and related complexes. The canonical complex contains a catalytic subunit (either SMARCA4/BRG1/BAF190A or SMARCA2/BRM/BAF190B) and at least SMARCE1, ACTL6A/BAF53, SMARCC1/BAF155, SMARCC2/BAF170, and SMARCB1/SNF5/BAF47. Other subunits specific to each of the complexes may also be present permitting several possible combinations developmentally and tissue specific. Component of the BAF complex, which includes at least actin (ACTB), ARID1A/BAF250A, ARID1B/BAF250B, SMARCA2/BRM, SMARCA4/BRG1/BAF190A, ACTL6A/BAF53, ACTL6B/BAF53B, SMARCE1/BAF57, SMARCC1/BAF155, SMARCC2/BAF170, SMARCB1/SNF5/INI1, and one or more SMARCD1/BAF60A, SMARCD2/BAF60B, or SMARCD3/BAF60C. In muscle cells, the BAF complex also contains DPF3. Component of the BAF53 complex, at least composed of ACTL6A/BAF53A, RUVBL1/TIP49, SMARCA2/BRM/BAF190B and TRRAP/PAF400, and which may also include a HAT activity related to, but distinct from, that of KAT5. Component of neural progenitors-specific chromatin remodeling complex (npBAF complex) composed of at least, ARID1A/BAF250A or ARID1B/BAF250B, SMARCD1/BAF60A, SMARCD3/BAF60C, SMARCA2/BRM/BAF190B, SMARCA4/BRG1/BAF190A, SMARCB1/BAF47, SMARCC1/BAF155, SMARCE1/BAF57, SMARCC2/BAF170, PHF10/BAF45A, ACTL6A/BAF53A and actin. Component of SWI/SNF (GBAF) subcomplex, which includes at least BICRA or BICRAL (mutually exclusive), BRD9, SS18, SMARCA2/BRM, SMARCA4/BRG1/BAF190A, ACTL6A/BAF53, SMARCC1/BAF155, and SMARCD1/BAF60A. May be a component of the SWI/SNF-B (PBAF) chromatin remodeling complex, at least composed of SMARCA4/BRG1, SMARCB1/BAF47/SNF5, ACTL6A/BAF53A or ACTL6B/BAF53B, SMARCE1/BAF57, SMARCD1/BAF60A, SMARCD2/BAF60B, perhaps SMARCD3/BAF60C, SMARCC1/BAF155, SMARCC2/BAF170, PBRM1/BAF180, ARID2/BAF200 and actin. Interacts with SMARCA4/BRG1/BAF190A. Interacts with PHF10/BAF45A. Component of the chromatin remodeling INO80 complex; specifically part of a complex module associated with the DBINO domain of INO80. Interacts with DPF2. As to expression, widely expressed. Expressed selectively in neural stem and progenitor cells (at protein level).

It is found in the nucleus. In terms of biological role, involved in transcriptional activation and repression of select genes by chromatin remodeling (alteration of DNA-nucleosome topology). Component of SWI/SNF chromatin remodeling complexes that carry out key enzymatic activities, changing chromatin structure by altering DNA-histone contacts within a nucleosome in an ATP-dependent manner. Required for maximal ATPase activity of SMARCA4/BRG1/BAF190A and for association of the SMARCA4/BRG1/BAF190A containing remodeling complex BAF with chromatin/nuclear matrix. Belongs to the neural progenitors-specific chromatin remodeling complex (npBAF complex) and is required for the proliferation of neural progenitors. During neural development a switch from a stem/progenitor to a postmitotic chromatin remodeling mechanism occurs as neurons exit the cell cycle and become committed to their adult state. The transition from proliferating neural stem/progenitor cells to postmitotic neurons requires a switch in subunit composition of the npBAF and nBAF complexes. As neural progenitors exit mitosis and differentiate into neurons, npBAF complexes which contain ACTL6A/BAF53A and PHF10/BAF45A, are exchanged for homologous alternative ACTL6B/BAF53B and DPF1/BAF45B or DPF3/BAF45C subunits in neuron-specific complexes (nBAF). The npBAF complex is essential for the self-renewal/proliferative capacity of the multipotent neural stem cells. The nBAF complex along with CREST plays a role regulating the activity of genes essential for dendrite growth. Component of the NuA4 histone acetyltransferase (HAT) complex which is involved in transcriptional activation of select genes principally by acetylation of nucleosomal histones H4 and H2A. This modification may both alter nucleosome - DNA interactions and promote interaction of the modified histones with other proteins which positively regulate transcription. This complex may be required for the activation of transcriptional programs associated with oncogene and proto-oncogene mediated growth induction, tumor suppressor mediated growth arrest and replicative senescence, apoptosis, and DNA repair. NuA4 may also play a direct role in DNA repair when recruited to sites of DNA damage. Putative core component of the chromatin remodeling INO80 complex which is involved in transcriptional regulation, DNA replication and probably DNA repair. This chain is Actin-like protein 6A (Actl6a), found in Mus musculus (Mouse).